The following is a 366-amino-acid chain: Ribosomal RNA large subunit methyltransferase M (366 aa).

Residues serine 188, 221–224, aspartate 240, aspartate 260, and aspartate 277 each bind S-adenosyl-L-methionine; that span reads CPGG. The Proton acceptor role is filled by lysine 306.

Belongs to the class I-like SAM-binding methyltransferase superfamily. RNA methyltransferase RlmE family. RlmM subfamily. Monomer.

Its subcellular location is the cytoplasm. It catalyses the reaction cytidine(2498) in 23S rRNA + S-adenosyl-L-methionine = 2'-O-methylcytidine(2498) in 23S rRNA + S-adenosyl-L-homocysteine + H(+). Functionally, catalyzes the 2'-O-methylation at nucleotide C2498 in 23S rRNA. This chain is Ribosomal RNA large subunit methyltransferase M, found in Salmonella gallinarum (strain 287/91 / NCTC 13346).